Consider the following 78-residue polypeptide: Large ribosomal subunit protein bL28 (78 aa).

Positions 1-25 are disordered; the sequence is MARVCQVTGKRPMSGHHVSHANNKT. Positions 13 to 25 are enriched in basic residues; the sequence is MSGHHVSHANNKT.

Belongs to the bacterial ribosomal protein bL28 family.

In Nitrosomonas eutropha (strain DSM 101675 / C91 / Nm57), this protein is Large ribosomal subunit protein bL28.